The following is a 146-amino-acid chain: Small ribosomal subunit protein uS9 (146 aa).

A Phosphoserine modification is found at Ser-3. Residue Lys-60 is modified to N6-acetyllysine.

This sequence belongs to the universal ribosomal protein uS9 family. In terms of assembly, component of the small ribosomal subunit. Part of the small subunit (SSU) processome, composed of more than 70 proteins and the RNA chaperone small nucleolar RNA (snoRNA) U3.

It is found in the cytoplasm. Its subcellular location is the nucleus. The protein resides in the nucleolus. Its function is as follows. Component of the small ribosomal subunit. The ribosome is a large ribonucleoprotein complex responsible for the synthesis of proteins in the cell. Part of the small subunit (SSU) processome, first precursor of the small eukaryotic ribosomal subunit. During the assembly of the SSU processome in the nucleolus, many ribosome biogenesis factors, an RNA chaperone and ribosomal proteins associate with the nascent pre-rRNA and work in concert to generate RNA folding, modifications, rearrangements and cleavage as well as targeted degradation of pre-ribosomal RNA by the RNA exosome. This is Small ribosomal subunit protein uS9 (RPS16) from Bos taurus (Bovine).